Here is a 248-residue protein sequence, read N- to C-terminus: Pyridoxine 5'-phosphate synthase (248 aa).

3-amino-2-oxopropyl phosphate is bound at residue Asn7. 9–10 contributes to the 1-deoxy-D-xylulose 5-phosphate binding site; sequence DH. A 3-amino-2-oxopropyl phosphate-binding site is contributed by Arg18. His43 (proton acceptor) is an active-site residue. 2 residues coordinate 1-deoxy-D-xylulose 5-phosphate: Arg45 and His50. Glu70 (proton acceptor) is an active-site residue. 1-deoxy-D-xylulose 5-phosphate is bound at residue Thr100. The active-site Proton donor is the His191. Residues Gly192 and 213–214 contribute to the 3-amino-2-oxopropyl phosphate site; that span reads GH.

The protein belongs to the PNP synthase family. In terms of assembly, homooctamer; tetramer of dimers.

It is found in the cytoplasm. The enzyme catalyses 3-amino-2-oxopropyl phosphate + 1-deoxy-D-xylulose 5-phosphate = pyridoxine 5'-phosphate + phosphate + 2 H2O + H(+). It functions in the pathway cofactor biosynthesis; pyridoxine 5'-phosphate biosynthesis; pyridoxine 5'-phosphate from D-erythrose 4-phosphate: step 5/5. Its function is as follows. Catalyzes the complicated ring closure reaction between the two acyclic compounds 1-deoxy-D-xylulose-5-phosphate (DXP) and 3-amino-2-oxopropyl phosphate (1-amino-acetone-3-phosphate or AAP) to form pyridoxine 5'-phosphate (PNP) and inorganic phosphate. This is Pyridoxine 5'-phosphate synthase from Bordetella bronchiseptica (strain ATCC BAA-588 / NCTC 13252 / RB50) (Alcaligenes bronchisepticus).